The sequence spans 2813 residues: von Willebrand factor (2813 aa).

The N-terminal stretch at 1-22 (MSPTRLVRVLLALALILPGKLC) is a signal peptide. A propeptide spanning residues 23-763 (TKGTVGRSSM…SSPRSHRSKR (741 aa)) is cleaved from the precursor. One can recognise a VWFD 1 domain in the interval 33 to 201 (ARCSLFGGDF…ALSSGEQRCK (169 aa)). Disulfide bonds link Cys-35-Cys-162 and Cys-57-Cys-200. 3 N-linked (GlcNAc...) asparagine glycosylation sites follow: Asn-99, Asn-156, and Asn-211. Residues 295–348 (CPAGMEYKECVSPCTRTCQSLHVKEVCQEQCVDGCSCPEGQLLDEGHCVGSAEC) form the TIL 1 domain. The region spanning 386 to 560 (GECLVTGQSH…NAWKLLGACE (175 aa)) is the VWFD 2 domain. Intrachain disulfides connect Cys-388/Cys-524, Cys-410/Cys-559, and Cys-432/Cys-440. Positions 531-533 (RGD) match the Cell attachment site motif. TIL domains are found at residues 652 to 707 (CPQG…KAQC) and 776 to 827 (CPAD…LERC). The N-linked (GlcNAc...) asparagine glycan is linked to Asn-666. A Cell attachment site motif is present at residues 698 to 700 (RGD). The interval 764-787 (SLSCRPPMVKLVCPADNPRAEGLE) is amino-terminal. Cystine bridges form between Cys-767-Cys-808, Cys-776-Cys-804, and Cys-810-Cys-821. The segment at 788 to 833 (CAKTCQNYDLQCMSTGCVSGCLCPQGMVRHENRCVALERCPCFHQG) is E1. Residues 826–853 (RCPCFHQGQEYAPGETVKIDCNTCVCRD) are CX. N-linked (GlcNAc...) asparagine glycosylation is present at Asn-857. The 168-residue stretch at 865 to 1032 (ATCSAIGMAH…NSWKVNPQCA (168 aa)) folds into the VWFD 3 domain. Cystine bridges form between Cys-867–Cys-996, Cys-889–Cys-1031, Cys-898–Cys-993, Cys-914–Cys-921, Cys-1060–Cys-1084, Cys-1071–Cys-1111, Cys-1089–Cys-1091, Cys-1126–Cys-1130, Cys-1149–Cys-1169, Cys-1153–Cys-1165, and Cys-1196–Cys-1199. The TIL 4 domain occupies 1146–1196 (YNSCAPACPITCQHPEPLACPVQCVEGCHAHCPPGKILDELLQTCIDPEDC). Asn-1231 carries N-linked (GlcNAc...) asparagine glycosylation. Disulfide bonds link Cys-1234–Cys-1237 and Cys-1272–Cys-1458. VWFA domains follow at residues 1277–1453 (DLVF…RDEI) and 1498–1665 (DVVF…PDLV). 2 N-linked (GlcNAc...) asparagine glycosylation sites follow: Asn-1515 and Asn-1574. 8 disulfides stabilise this stretch: Cys-1669-Cys-1670, Cys-1686-Cys-1872, Cys-1879-Cys-1904, Cys-1899-Cys-1940, Cys-1927-Cys-2088, Cys-1950-Cys-2085, Cys-1972-Cys-2123, and Cys-1993-Cys-2001. The 181-residue stretch at 1691–1871 (DVVLLLDGSS…TLGNSFFHKL (181 aa)) folds into the VWFA 3 domain. The region spanning 1948–2124 (CVCMGSSTRH…TVQQLGKTCQ (177 aa)) is the VWFD 4 domain. Residues 2216-2261 (CPRLCEGNTSSCGDQPSEGCFCPPNQVMLEGSCVPEEACTQCISED) are E2. N-linked (GlcNAc...) asparagine glycans are attached at residues Asn-2223, Asn-2290, Asn-2357, and Asn-2400. The region spanning 2255–2328 (TQCISEDGVR…CCPEYECVCD (74 aa)) is the VWFC 1 domain. The 67-residue stretch at 2429 to 2495 (KVCVHRGTIY…HEGECCGRCL (67 aa)) folds into the VWFC 2 domain. A Cell attachment site motif is present at residues 2507–2509 (RGD). N-linked (GlcNAc...) asparagine glycans are attached at residues Asn-2546 and Asn-2585. In terms of domain architecture, VWFC 3 spans 2580–2645 (EACLLNGTII…NQGECCGRCL (66 aa)). Cystine bridges form between Cys-2724–Cys-2774, Cys-2739–Cys-2788, Cys-2750–Cys-2804, and Cys-2754–Cys-2806. In terms of domain architecture, CTCK spans 2724-2812 (CKDIIAKLQR…QCRCSPRKCS (89 aa)). N-linked (GlcNAc...) asparagine glycosylation is present at Asn-2790.

In terms of assembly, multimeric. Interacts with F8. In terms of processing, all cysteine residues are involved in intrachain or interchain disulfide bonds. Post-translationally, N- and O-glycosylated. In terms of tissue distribution, plasma.

It localises to the secreted. It is found in the extracellular space. The protein resides in the extracellular matrix. Its function is as follows. Important in the maintenance of hemostasis, it promotes adhesion of platelets to the sites of vascular injury by forming a molecular bridge between sub-endothelial collagen matrix and platelet-surface receptor complex, glycoprotein Ibalpha/IX/V. Also acts as a chaperone for coagulation factor VIII, delivering it to the site of injury, stabilizing its heterodimeric structure and protecting it from premature clearance from plasma. The sequence is that of von Willebrand factor (VWF) from Canis lupus familiaris (Dog).